Here is a 329-residue protein sequence, read N- to C-terminus: Probable nicotianamine synthase 4 (329 aa).

It belongs to the nicotianamine synthase (NAS)-like family.

It carries out the reaction 3 S-adenosyl-L-methionine = nicotianamine + 3 S-methyl-5'-thioadenosine + 3 H(+). In terms of biological role, synthesizes nicotianamine, a polyamine that is the first intermediate in the synthesis of the phytosiderophores of the mugineic acid type found in gramineae which serves as a sensor for the physiological iron status within the plant, and/or might be involved in the transport of iron. The chain is Probable nicotianamine synthase 4 (NAS4) from Hordeum vulgare (Barley).